The sequence spans 499 residues: Glucose-6-phosphate exchanger SLC37A2 (499 aa).

Residues tyrosine 21–arginine 40 traverse the membrane as a helical segment. N-linked (GlcNAc...) asparagine glycosylation is found at asparagine 53, asparagine 62, and asparagine 66. Transmembrane regions (helical) follow at residues glycine 86–phenylalanine 106, leucine 116–tryptophan 136, isoleucine 138–glycine 158, alanine 187–leucine 207, serine 208–valine 228, leucine 302–isoleucine 322, glycine 334–isoleucine 354, alanine 362–leucine 382, valine 391–alanine 411, alanine 434–leucine 454, and glycine 458–valine 478.

The protein belongs to the major facilitator superfamily. Organophosphate:Pi antiporter (OPA) (TC 2.A.1.4) family.

The protein resides in the endoplasmic reticulum membrane. The enzyme catalyses D-glucose 6-phosphate(in) + phosphate(out) = D-glucose 6-phosphate(out) + phosphate(in). Functionally, inorganic phosphate and glucose-6-phosphate antiporter. May transport cytoplasmic glucose-6-phosphate into the lumen of the endoplasmic reticulum and translocate inorganic phosphate into the opposite direction. This Xenopus tropicalis (Western clawed frog) protein is Glucose-6-phosphate exchanger SLC37A2.